The sequence spans 790 residues: Protein sel-1 homolog 1 (790 aa).

The signal sequence occupies residues 1-21 (MQVRVRLSLLLLCAVLLGSAA). The disordered stretch occupies residues 22 to 51 (ATSDDKTNQDDSLDSKSSLPTDESVKDHTT). The Lumenal portion of the chain corresponds to 22 to 734 (ATSDDKTNQD…LFTQLDMDQL (713 aa)). Residues 23 to 733 (TSDDKTNQDD…DLFTQLDMDQ (711 aa)) are interaction with ERLEC1, OS9 and SYVN1. S64 bears the Phosphoserine mark. Residues 67 to 78 (AEVESLLQDEED) show a composition bias toward acidic residues. The interval 67–98 (AEVESLLQDEEDSSKTQEEEISFLESPNPSSK) is disordered. One can recognise a Fibronectin type-II domain in the interval 118–166 (AHGEPCHFPFLFLDKEYDECTSDGREDGRLWCATTYDYKTDEKWGFCET). 2 cysteine pairs are disulfide-bonded: C123-C149 and C137-C164. Sel1-like repeat units lie at residues 179–214 (AEMI…GMNH), 215–250 (TKAL…EEGS), 251–286 (PKGQ…LGGN), 287–322 (LIAH…NHVA), 369–405 (VQAQ…NAGN), 406–442 (SHAM…DMGN), 443–478 (PVGQ…EQGW), 479–514 (VDGQ…QGGH), and 515–550 (ILAF…ERGR). N-linked (GlcNAc...) asparagine glycosylation is found at N191 and N213. The N-linked (GlcNAc...) asparagine glycan is linked to N268. The tract at residues 348 to 533 (NSGMLEEDLI…MHASGTGVMR (186 aa)) is important for homodimerization and oligomerization. The N-linked (GlcNAc...) asparagine glycan is linked to N427. N-linked (GlcNAc...) asparagine glycosylation occurs at N604. Sel1-like repeat units follow at residues 623–658 (TVAR…EQQH) and 660–695 (AQAM…EASP). The interaction with SYVN1 stretch occupies residues 639–719 (TDVDYETAFI…VVYFLQYIRE (81 aa)). The interval 734–790 (LLGPEWDLYLMTIIALLLGTVIAYRQRQHQDIPVPRPPGPRPAPPQQEGPPEQQPPQ) is mediates retention in the endoplasmic reticulum. Residues 735–755 (LGPEWDLYLMTIIALLLGTVI) traverse the membrane as a helical segment. At 756-790 (AYRQRQHQDIPVPRPPGPRPAPPQQEGPPEQQPPQ) the chain is on the cytoplasmic side. Residues 763 to 790 (QDIPVPRPPGPRPAPPQQEGPPEQQPPQ) are disordered. The segment covering 767-790 (VPRPPGPRPAPPQQEGPPEQQPPQ) has biased composition (pro residues).

This sequence belongs to the sel-1 family. As to quaternary structure, homodimer and homooligomer. May form a complex with ERLEC1, HSPA5, OS9, and SYVN1. Interacts with FOXRED2 and EDEM1. Interacts with LPL and LMF1; may stabilize the complex formed by LPL and LMF1 and thereby promote the export of LPL dimers. Component of the HRD1 complex, which comprises at least SYNV1/HRD1, DERL1/2, FAM8A1, HERPUD1/HERP, OS9, SEL1L and UBE2J1. SYNV1 assembles with SEL1L and FAM8A1 through its transmembrane domains, but interaction with its cytoplasmic domain is required to confer stability to FAM8A1 and enhance recruitment of HERPUD1. The interaction with SYNV1/HRD1 is direct. N-glycosylated. Highly expressed in pancreas, white adipose tissue, liver and spleen (at protein level). Detected in heart, brain, spleen, lung, liver, kidney and testis.

Its subcellular location is the endoplasmic reticulum membrane. In terms of biological role, plays a role in the endoplasmic reticulum quality control (ERQC) system also called ER-associated degradation (ERAD) involved in ubiquitin-dependent degradation of misfolded endoplasmic reticulum proteins. Enhances SYVN1 stability. Plays a role in LPL maturation and secretion. Required for normal differentiation of the pancreas epithelium, and for normal exocrine function and survival of pancreatic cells. May play a role in Notch signaling. This is Protein sel-1 homolog 1 (Sel1l) from Mus musculus (Mouse).